The chain runs to 404 residues: Lissencephaly-1 homolog (404 aa).

The 33-residue stretch at 7–39 folds into the LisH domain; that stretch reads QKEEINRAIAEYMQNNGYSESFSVFLKESSLSE. The stretch at 54–81 forms a coiled coil; it reads TTVLRLQRKVNDLESKLQESQREINHGA. Basic and acidic residues predominate over residues 69–89; sequence KLQESQREINHGAPTRDKRQA. A disordered region spans residues 69 to 90; sequence KLQESQREINHGAPTRDKRQAA. 7 WD repeats span residues 104-145, 146-185, 189-228, 231-270, 273-327, 330-369, and 372-404; these read GHRL…RTLK, GHTD…DCLK, GHEH…CVYT, GHND…AKLV, DHEH…VLFT, AHEN…CMKA, and AHEH…WECR.

It belongs to the WD repeat LIS1/nudF family. As to quaternary structure, component of a dynein-regulating complex composed of at least lis-1 and nud-2. Interacts with nud-2; the interaction is direct. As to expression, expressed in all classes of neurons in the ventral cord. Expressed in the multinucleate spermathecal valves and adult seam cells.

The protein localises to the cytoplasm. It is found in the cytoskeleton. The protein resides in the microtubule organizing center. It localises to the centrosome. Its subcellular location is the chromosome. The protein localises to the centromere. It is found in the kinetochore. The protein resides in the nucleus envelope. Its function is as follows. Positively regulates the activity of the minus-end directed microtubule motor protein dynein. May enhance dynein-mediated microtubule sliding by targeting dynein to the microtubule plus end. Required for several dynein- and microtubule-dependent processes such as nuclear migration during cell division. Part of a complex with nud-2, which is recruited to the nuclear envelope by unc-83, where, in turn, it recruits dynein to the nuclear surface and regulates nuclear migration in hypodermal precursor cells. Plays a role in GABAergic synaptic vesicle localization in the ventral nerve cord. Required for neuronal cell differentiation. This Caenorhabditis elegans protein is Lissencephaly-1 homolog.